A 472-amino-acid chain; its full sequence is Ribosomal protein uS12 methylthiotransferase RimO (472 aa).

In terms of domain architecture, MTTase N-terminal spans 33-143 (NRIGFVSLGC…VLKHVHKYVP (111 aa)). [4Fe-4S] cluster contacts are provided by Cys-42, Cys-78, Cys-107, Cys-175, Cys-179, and Cys-182. The Radical SAM core domain occupies 161–398 (LTPKHYAYLK…MELQAEISAE (238 aa)). The 67-residue stretch at 401–467 (ARFVGRTLDI…EHDLWAEVVD (67 aa)) folds into the TRAM domain.

Belongs to the methylthiotransferase family. RimO subfamily. The cofactor is [4Fe-4S] cluster.

It is found in the cytoplasm. It catalyses the reaction L-aspartate(89)-[ribosomal protein uS12]-hydrogen + (sulfur carrier)-SH + AH2 + 2 S-adenosyl-L-methionine = 3-methylsulfanyl-L-aspartate(89)-[ribosomal protein uS12]-hydrogen + (sulfur carrier)-H + 5'-deoxyadenosine + L-methionine + A + S-adenosyl-L-homocysteine + 2 H(+). Functionally, catalyzes the methylthiolation of an aspartic acid residue of ribosomal protein uS12. This Shewanella sp. (strain W3-18-1) protein is Ribosomal protein uS12 methylthiotransferase RimO.